The primary structure comprises 479 residues: U3 snoRNP-associated protein-like EMB2271 (479 aa).

Residues 1–73 (MKLEKKKGIG…AHETVGEKRK (73 aa)) are disordered. Over residues 8–17 (GIGAKRRGKK) the composition is skewed to basic residues. A compositionally biased stretch (basic and acidic residues) spans 18-38 (SSIDHDPFLEEETEKRRKFNY). Over residues 39–51 (DDDDDIESVESEE) the composition is skewed to acidic residues. The span at 52 to 73 (EGKVGEEVEDEFAHETVGEKRK) shows a compositional bias: basic and acidic residues. WD repeat units follow at residues 143 to 182 (KHQH…SDEY), 204 to 243 (RHNK…HVQA), 246 to 285 (GHCG…YIES), 288 to 326 (GHQS…RLIY), 328 to 366 (ASES…PVFI), 386 to 425 (PACS…SAIQ), and 431 to 471 (PLPG…QNGV).

It belongs to the WD repeat RRP9 family.

The protein localises to the nucleus. Its subcellular location is the nucleolus. Component of a nucleolar small nuclear ribonucleoprotein particle (snoRNP) thought to participate in the processing and modification of pre-ribosomal RNA. Essential for embryogenesis. May function during late embryogenesis. The sequence is that of U3 snoRNP-associated protein-like EMB2271 from Arabidopsis thaliana (Mouse-ear cress).